The chain runs to 392 residues: D-amino-acid oxidase 2 (392 aa).

8 residues coordinate FAD: serine 10, isoleucine 13, arginine 33, aspartate 34, alanine 45, serine 46, glycine 50, and asparagine 52. Anthranilate is bound by residues phenylalanine 56, tyrosine 245, tyrosine 262, and arginine 311. (R)-lactate is bound by residues tyrosine 245, tyrosine 262, and arginine 311. Positions 311, 361, 362, 364, and 366 each coordinate FAD. Position 362 (serine 362) interacts with anthranilate. Serine 362 provides a ligand contact to (R)-lactate. Positions 390–392 (AKL) match the Microbody targeting signal motif.

This sequence belongs to the DAMOX/DASOX family. The cofactor is FAD.

It is found in the peroxisome matrix. It carries out the reaction a D-alpha-amino acid + O2 + H2O = a 2-oxocarboxylate + H2O2 + NH4(+). The catalysed reaction is D-methionine + O2 + H2O = 4-methylsulfanyl-2-oxobutanoate + H2O2 + NH4(+). The enzyme catalyses D-serine + O2 + H2O = 3-hydroxypyruvate + H2O2 + NH4(+). It catalyses the reaction D-histidine + O2 + H2O = 3-(imidazol-5-yl)pyruvate + H2O2 + NH4(+). It carries out the reaction D-proline + O2 = 1-pyrroline-2-carboxylate + H2O2. The catalysed reaction is D-alanine + O2 + H2O = pyruvate + H2O2 + NH4(+). The enzyme catalyses D-leucine + O2 + H2O = 4-methyl-2-oxopentanoate + H2O2 + NH4(+). It catalyses the reaction D-valine + O2 + H2O = 3-methyl-2-oxobutanoate + H2O2 + NH4(+). In terms of biological role, catalyzes the oxidative deamination of D-amino acids with broad substrate specificity. Enables the organism to utilize D-amino acids as a source of nutrients. Enables the organism to utilize D-alanine, D-cysteine, D-histidine, D-leucine, D-methionine, D-phenylalanine, D-proline, D-serine, D-threonine, D-aspartate and D-valine as a nitrogen source and may also contribute to utlization of D-tryptophan, D-tyrosine and D-asparagine as a nitrogen source. Protects the organism from the toxicity of D-amino acids, including from D-alanine. May play a role in its interaction with the host. The chain is D-amino-acid oxidase 2 from Cryptococcus deuterogattii (strain R265) (Cryptococcus gattii VGII (strain R265)).